The primary structure comprises 281 residues: Radiation response metalloprotease IrrE (281 aa).

Histidine 82 provides a ligand contact to Zn(2+). Glutamate 83 is an active-site residue. Histidine 86 and glutamate 113 together coordinate Zn(2+). The interval 262-281 (LPAGRSEPDADKPEAPGDQS) is disordered. Residues 267–281 (SEPDADKPEAPGDQS) are compositionally biased toward basic and acidic residues.

Interacts with DdrOC.

Its activity is regulated as follows. Protease activity is inhibited by EDTA. Plays a central regulatory role in DNA repair and protection pathways in response to radiation stress. Acts as a site-specific metalloprotease that cleaves and inactivates the repressor proteins DdrOC and DdrOP3, resulting in induced expression of genes required for DNA repair and cell survival after exposure to radiation. The polypeptide is Radiation response metalloprotease IrrE (Deinococcus deserti (strain DSM 17065 / CIP 109153 / LMG 22923 / VCD115)).